Reading from the N-terminus, the 278-residue chain is MTVLHSVDFFPSGNASVAIEPRLPQADFPEHHHDFHEIVIVEHGTGIHVFNGQPYTITGGTVCFVRDHDRHLYEHTDNLCLTNVLYRSPDRFQFLAGLNQLLPQEQDGQYPSHWRVNHSVLQQVRQLVAQMEQQEEENDLPSTASREILFMQLLLLLRKSSLQENLENSASRLNLLLAWLEDHFADEVNWDAVADQFSLSLRTLHRQLKQKTGLTPQRYLNRLRLMKARHLLRHSEASVTDIAYRCGFSDSNHFSTLFRREFNWSPRDIRQGRDGFLQ.

The HTH araC/xylS-type domain occupies 174–272; sequence NLLLAWLEDH…NWSPRDIRQG (99 aa). 2 DNA-binding regions (H-T-H motif) span residues 191 to 212 and 239 to 262; these read DAVA…KQKT and VTDI…RREF.

Binds DNA as a dimer.

It is found in the cytoplasm. Its function is as follows. Activates expression of the rhaBAD and rhaT operons. In Escherichia coli O45:K1 (strain S88 / ExPEC), this protein is HTH-type transcriptional activator RhaS.